A 104-amino-acid polypeptide reads, in one-letter code: Nucleoid-associated protein EF_2780 (104 aa).

This sequence belongs to the YbaB/EbfC family. Homodimer.

The protein localises to the cytoplasm. Its subcellular location is the nucleoid. Binds to DNA and alters its conformation. May be involved in regulation of gene expression, nucleoid organization and DNA protection. The protein is Nucleoid-associated protein EF_2780 of Enterococcus faecalis (strain ATCC 700802 / V583).